Here is a 908-residue protein sequence, read N- to C-terminus: WD repeat-containing protein 44 (908 aa).

The interval 1-163 (MMPLKMCTWG…SSADQLDASK (163 aa)) is binding activity. A phosphoserine mark is found at Ser17, Ser40, Ser61, Ser71, Ser86, and Ser116. Polar residues-rich tracts occupy residues 108–120 (QQGS…QNAA) and 148–157 (NNLTEVSSAD). Disordered stretches follow at residues 108–158 (QQGS…SADQ), 202–273 (APAK…KDNI), 309–341 (TAQE…RELT), 391–418 (VSND…RLKQ), and 454–474 (DEVF…GMPY). 2 positions are modified to phosphothreonine: Thr151 and Thr211. The segment at 203–249 (PAKPPRHLTPEPDIVASTKKPVPARPPPPTNFPPPRPPPPSRPAPPP) is important for interaction with ARHGAP26 AND ARHGAP10. The span at 225–248 (PARPPPPTNFPPPRPPPPSRPAPP) shows a compositional bias: pro residues. A Phosphoserine modification is found at Ser254. A compositionally biased stretch (basic and acidic residues) spans 254–270 (SDLEFEALKTPDLDVPK). A Phosphothreonine modification is found at Thr263. Positions 326 to 339 (VMGPQRPRSNSGRE) are important for interaction with RAB11A. Ser334 and Ser336 each carry phosphoserine. Residues Thr341 and Thr396 each carry the phosphothreonine modification. Residues Ser398, Ser465, Ser466, and Ser467 each carry the phosphoserine modification. A compositionally biased stretch (acidic residues) spans 462 to 471 (DDPSSSDDEG). Tyr474 carries the post-translational modification Phosphotyrosine. A WD 1 repeat occupies 504 to 543 (EHMGAVWTMKFSHCGRLLASAGQDNIVRIWALKNAFDYFN). A disordered region spans residues 552 to 587 (EGRVSPSPSQESLSSSKSDTDMGVCSGTDEDPDDKN). A phosphoserine mark is found at Ser556 and Ser560. Low complexity predominate over residues 556 to 568 (SPSPSQESLSSSK). WD repeat units follow at residues 600–638 (GHTA…CLCC), 640–680 (QHID…VALW), 685–724 (GQTK…YHTQ), 735–774 (KVGR…LSMK), and 779–818 (VNSS…SKFT).

Interacts preferentially with the GTP-bound form of RAB11 when membrane-associated. Interacts with GRAF1/ARHGAP26 or GRAF2/ARHGAP10; the interaction connects the endoplasmic reticulum (ER) with the endosomal tubule. Interacts with VAPA (via MSP domain) or VAPB (via MSP domain); the interaction connects the ER with the endosomal tubule. Does not bind to other Rab and Rho small G proteins. In terms of processing, phosphorylated by ATK1; the phosphorylation stabilizes its interaction with RAB11A and RAB11B. As to expression, expressed in heart; brain; spleen; lung; liver; muscle and kidney.

It localises to the cytoplasm. Its subcellular location is the cytosol. The protein localises to the perinuclear region. The protein resides in the endosome membrane. It is found in the golgi apparatus. It localises to the trans-Golgi network. Downstream effector for Rab11 which regulates Rab11 intracellular membrane trafficking functions such as endocytic recycling, intracellular ciliogenesis and protein export. ATK1-mediated phosphorylation of WDR44 induces binding to Rab11 which activates endocytic recycling of transferrin receptor back to the plasma membrane. When bound to Rab11, prevents the formation of the ciliogenic Rab11-Rabin8/RAB3IP-RAB11FIP3 complex, therefore inhibiting preciliary trafficking and ciliogenesis. May participate in neo-synthesized protein export by connecting the endoplasmic reticulum (ER) with the endosomal tubule via direct interactions with the integral ER proteins VAPA or VAPB and the endosomal protein GRAFs (GRAF1/ARHGAP26 or GRAF2/ARHGAP10), which facilitates the transfer of proteins such as E-cadherin, MPP14 and CFTR into a Rab8-Rab10-Rab11-dependent export route. This is WD repeat-containing protein 44 from Rattus norvegicus (Rat).